Reading from the N-terminus, the 608-residue chain is Signal transduction histidine-protein kinase AtoS (608 aa).

Over 1-15 the chain is Cytoplasmic; it reads MHYMKWIYPRRLRNQ. The helical transmembrane segment at 16-36 threads the bilayer; that stretch reads MILMAILMVIVPTLTIGYIVE. Residues 37–189 lie on the Periplasmic side of the membrane; sequence TEGRSAVLSE…DIRRQAWKMD (153 aa). The helical transmembrane segment at 190 to 210 threads the bilayer; the sequence is VRIIIVLTAGLLISLLLIVLF. Residues 211-608 lie on the Cytoplasmic side of the membrane; that stretch reads SRRLSANIDI…PINPQGNQTV (398 aa). One can recognise an HAMP domain in the interval 212–262; that stretch reads RRLSANIDIITDGLSTLAQNIPTRLPQLPGEMGQISQSVNNLAQALRETRT. The PAS domain maps to 260-305; that stretch reads TRTLNDLIIENAADGVIAIDRQGDVTTMNPAAEVITGYQRHELVGQ. The PAC domain occupies 326–382; it reads HGTEHVALEISFPGRDRTIELSVTTSRIHNTHGEMIGALVIFSDLTARKETQRRMAQ. One can recognise a Histidine kinase domain in the interval 395–602; sequence GVAHEVRNPL…TFTLILPINP (208 aa). His398 carries the post-translational modification Phosphohistidine; by autocatalysis.

In terms of assembly, homodimer. In terms of processing, autophosphorylated. Each AtoS molecule may phosphorylate its partner within the dimer rather than phosphorylating itself.

Its subcellular location is the cell inner membrane. The enzyme catalyses ATP + protein L-histidine = ADP + protein N-phospho-L-histidine.. Member of the two-component regulatory system AtoS/AtoC. In the presence of acetoacetate, AtoS/AtoC stimulates the expression of the atoDAEB operon, leading to short chain fatty acid catabolism and activation of the poly-(R)-3-hydroxybutyrate (cPHB) biosynthetic pathway. Also induces the operon in response to spermidine. Involved in the regulation of motility and chemotaxis, via transcriptional induction of the flagellar regulon. AtoS is a membrane-associated kinase that phosphorylates and activates AtoC in response to environmental signals. The sequence is that of Signal transduction histidine-protein kinase AtoS (atoS) from Escherichia coli (strain K12).